The chain runs to 309 residues: Porphobilinogen deaminase (309 aa).

Residue cysteine 244 is modified to S-(dipyrrolylmethanemethyl)cysteine.

Belongs to the HMBS family. As to quaternary structure, monomer. Requires dipyrromethane as cofactor.

It catalyses the reaction 4 porphobilinogen + H2O = hydroxymethylbilane + 4 NH4(+). Its pathway is porphyrin-containing compound metabolism; protoporphyrin-IX biosynthesis; coproporphyrinogen-III from 5-aminolevulinate: step 2/4. In terms of biological role, tetrapolymerization of the monopyrrole PBG into the hydroxymethylbilane pre-uroporphyrinogen in several discrete steps. In Listeria monocytogenes serotype 4b (strain CLIP80459), this protein is Porphobilinogen deaminase.